Reading from the N-terminus, the 385-residue chain is UDP-N-acetylglucosamine--N-acetylmuramyl-(pentapeptide) pyrophosphoryl-undecaprenol N-acetylglucosamine transferase (385 aa).

UDP-N-acetyl-alpha-D-glucosamine-binding positions include 24–26 (TAG), asparagine 143, arginine 180, serine 214, and glutamine 310.

Belongs to the glycosyltransferase 28 family. MurG subfamily.

The protein resides in the cell membrane. It carries out the reaction di-trans,octa-cis-undecaprenyl diphospho-N-acetyl-alpha-D-muramoyl-L-alanyl-D-glutamyl-meso-2,6-diaminopimeloyl-D-alanyl-D-alanine + UDP-N-acetyl-alpha-D-glucosamine = di-trans,octa-cis-undecaprenyl diphospho-[N-acetyl-alpha-D-glucosaminyl-(1-&gt;4)]-N-acetyl-alpha-D-muramoyl-L-alanyl-D-glutamyl-meso-2,6-diaminopimeloyl-D-alanyl-D-alanine + UDP + H(+). It participates in cell wall biogenesis; peptidoglycan biosynthesis. Functionally, cell wall formation. Catalyzes the transfer of a GlcNAc subunit on undecaprenyl-pyrophosphoryl-MurNAc-pentapeptide (lipid intermediate I) to form undecaprenyl-pyrophosphoryl-MurNAc-(pentapeptide)GlcNAc (lipid intermediate II). The chain is UDP-N-acetylglucosamine--N-acetylmuramyl-(pentapeptide) pyrophosphoryl-undecaprenol N-acetylglucosamine transferase from Mycolicibacterium smegmatis (strain ATCC 700084 / mc(2)155) (Mycobacterium smegmatis).